The primary structure comprises 125 residues: Phosphoribosyl-AMP cyclohydrolase (125 aa).

Mg(2+) is bound at residue aspartate 74. Cysteine 75 lines the Zn(2+) pocket. Residues aspartate 76 and aspartate 78 each coordinate Mg(2+). Cysteine 92 and cysteine 99 together coordinate Zn(2+).

Belongs to the PRA-CH family. As to quaternary structure, homodimer. Mg(2+) serves as cofactor. It depends on Zn(2+) as a cofactor.

Its subcellular location is the cytoplasm. It catalyses the reaction 1-(5-phospho-beta-D-ribosyl)-5'-AMP + H2O = 1-(5-phospho-beta-D-ribosyl)-5-[(5-phospho-beta-D-ribosylamino)methylideneamino]imidazole-4-carboxamide. It functions in the pathway amino-acid biosynthesis; L-histidine biosynthesis; L-histidine from 5-phospho-alpha-D-ribose 1-diphosphate: step 3/9. Catalyzes the hydrolysis of the adenine ring of phosphoribosyl-AMP. The polypeptide is Phosphoribosyl-AMP cyclohydrolase (Geobacter sp. (strain M21)).